Consider the following 394-residue polypeptide: 4-hydroxyphenylpyruvate dioxygenase (394 aa).

2 VOC domains span residues 27-161 (GYDH…LIER) and 193-351 (HIDH…LFTK). His-196, His-279, and Glu-362 together coordinate Fe cation.

The protein belongs to the 4HPPD family. Requires Fe cation as cofactor.

The enzyme catalyses 3-(4-hydroxyphenyl)pyruvate + O2 = homogentisate + CO2. Its pathway is amino-acid degradation; L-phenylalanine degradation; acetoacetate and fumarate from L-phenylalanine: step 3/6. The protein is 4-hydroxyphenylpyruvate dioxygenase of Yarrowia lipolytica (strain CLIB 122 / E 150) (Yeast).